We begin with the raw amino-acid sequence, 158 residues long: Transcription elongation factor GreA (158 aa).

A coiled-coil region spans residues 45–72 (AEYHAAREQQSFIEGRIKQLEGELSHAE).

Belongs to the GreA/GreB family.

Functionally, necessary for efficient RNA polymerase transcription elongation past template-encoded arresting sites. The arresting sites in DNA have the property of trapping a certain fraction of elongating RNA polymerases that pass through, resulting in locked ternary complexes. Cleavage of the nascent transcript by cleavage factors such as GreA or GreB allows the resumption of elongation from the new 3'terminus. GreA releases sequences of 2 to 3 nucleotides. The polypeptide is Transcription elongation factor GreA (Xylella fastidiosa (strain M23)).